Consider the following 308-residue polypeptide: E3 ubiquitin-protein ligase RING2 (308 aa).

Position 2 is an N-acetylserine (Ser-2). An interaction with HIP2 region spans residues 2–179 (SQAVQTNGTQ…AEDNGDSSHC (178 aa)). At Ser-41 the chain carries Phosphoserine. An RING-type zinc finger spans residues 51–91 (CPICLDMLKNTMTTKECLHRFCADCIITALRSGNKECPTCR). The tract at residues 93-98 (KLVSKR) is interaction with nucleosomes via an acidic patch on histone H2A and histone H2B. Lys-112 participates in a covalent cross-link: Glycyl lysine isopeptide (Lys-Gly) (interchain with G-Cter in ubiquitin). Phosphoserine is present on residues Ser-143 and Ser-168. The tract at residues 157–206 (QRGKKQQIENGSGAEDNGDSSHCSNASTHSNQEAGPSNKRTKTSDDSGLE) is disordered. Positions 176-191 (SSHCSNASTHSNQEAG) are enriched in polar residues. A Glycyl lysine isopeptide (Lys-Gly) (interchain with G-Cter in SUMO2) cross-link involves residue Lys-249.

As to quaternary structure, component of chromatin-associated Polycomb (PcG) complexes. Component of a number of PRC1-like complexes; these complexes contain either the polycomb group ring finger protein PCGF1, or PCGF2, or PCGF3, or BMI1, or PCGF5, or PCGF6. Distinct PRC1-like complexes are composed of a RING1 subunit (RING1B or RING1A), one of the six PCGF proteins (PCGF1, PCGF2, PCGF3, BMI1, PCGF5 or PCGF6), one PHC protein (PHC1, PHC2 or PHC3) and one of the CBX proteins (CBX2, CBX4, CBX6, CBX7 or CBX8). Part of a complex that contains RNF2, UB2D3 and BMI1; within that complex RNF2 and BMI1 form a tight heterodimer, where UB2D3 interacts only with RNF2. The complex composed of RNF2, UB2D3 and BMI1 binds nucleosomes, and has activity only with nucleosomal histone H2A. Part of a complex that contains PCGF5, RNF2 and UBE2D3. Part of a complex that contains AUTS2, PCGF5, RNF2, CSNK2B and RYBP. Interacts with CBX6 and CBX8. Interacts with PHC1, PCGF2, RYBP, CBX7, CBX4, CBX2, RNF1/RING1, BMI1 and PHC2. Interaction with RYBP and CBX7 is mutually exclusive; both compete for the same binding site on RNF2. Component of repressive BCOR complex containing a Polycomb group subcomplex at least composed of RYBP, PCGF1, BCOR and RING1. Interacts with CBX2 and PHC1. Interacts with CHTOP. Interacts with AURKB. Part of the E2F6.com-1 complex in G0 phase composed of E2F6, MGA, MAX, TFDP1, CBX3, BAT8, EUHMTASE1, RNF1/RING1, RNF2/RING2, MBLR, L3MBTL2 and YAF2. Component of some MLL1/MLL complex, at least composed of the core components KMT2A/MLL1, ASH2L, HCFC1/HCF1, WDR5 and RBBP5, as well as the facultative components BACC1, CHD8, E2F6, HSP70, INO80C, KANSL1, LAS1L, MAX, MCRS1, MGA, MYST1/MOF, PELP1, PHF20, PRP31, RING2, RUVB1/TIP49A, RUVB2/TIP49B, SENP3, TAF1, TAF4, TAF6, TAF7, TAF9 and TEX10. Interacts with RYBP, HIP2 and TFCP2. Interacts with NUPR1. Interacts with SAMD7 in a PHC2-dependent manner. In terms of processing, monoubiquitinated, by auto-ubiquitination. Polyubiquitinated in the presence of UBE2D3 (in vitro).

The protein resides in the nucleus. It localises to the cytoplasm. The protein localises to the chromosome. The catalysed reaction is S-ubiquitinyl-[E2 ubiquitin-conjugating enzyme]-L-cysteine + [acceptor protein]-L-lysine = [E2 ubiquitin-conjugating enzyme]-L-cysteine + N(6)-ubiquitinyl-[acceptor protein]-L-lysine.. It functions in the pathway protein modification; protein ubiquitination. E3 ubiquitin-protein ligase that mediates monoubiquitination of 'Lys-119' of histone H2A (H2AK119Ub), thereby playing a central role in histone code and gene regulation. H2AK119Ub gives a specific tag for epigenetic transcriptional repression and participates in X chromosome inactivation of female mammals. May be involved in the initiation of both imprinted and random X inactivation. Essential component of a Polycomb group (PcG) multiprotein PRC1-like complex, a complex class required to maintain the transcriptionally repressive state of many genes, including Hox genes, throughout development. PcG PRC1 complex acts via chromatin remodeling and modification of histones, rendering chromatin heritably changed in its expressibility. E3 ubiquitin-protein ligase activity is enhanced by BMI1/PCGF4. Acts as the main E3 ubiquitin ligase on histone H2A of the PRC1 complex, while RING1 may rather act as a modulator of RNF2/RING2 activity. Plays a role in the transcriptional repression of genes that are required for pluripotency in embryonic stem cells, thereby contributing to differentiation of the ectodermal and endodermal germ layers. Association with the chromosomal DNA is cell-cycle dependent. In resting B- and T-lymphocytes, interaction with AURKB leads to block its activity, thereby maintaining transcription in resting lymphocytes. Also acts as a negative regulator of autophagy by mediating ubiquitination of AMBRA1, leading to its subsequent degradation. The chain is E3 ubiquitin-protein ligase RING2 (Rnf2) from Rattus norvegicus (Rat).